The following is an 84-amino-acid chain: uncharacterized protein (84 aa).

3 consecutive transmembrane segments (helical) span residues 8–28, 30–50, and 63–83; these read IYFF…VNLL, INVI…ISTI, and VLFM…LYIP.

Its subcellular location is the cell membrane. This is an uncharacterized protein from Methanocaldococcus jannaschii (strain ATCC 43067 / DSM 2661 / JAL-1 / JCM 10045 / NBRC 100440) (Methanococcus jannaschii).